Reading from the N-terminus, the 251-residue chain is uncharacterized protein (251 aa).

The protein belongs to the FAM243 family.

This is an uncharacterized protein from Homo sapiens (Human).